The primary structure comprises 382 residues: Alkanesulfonate monooxygenase (382 aa).

It belongs to the SsuD family.

It catalyses the reaction an alkanesulfonate + FMNH2 + O2 = an aldehyde + FMN + sulfite + H2O + 2 H(+). In terms of biological role, catalyzes the desulfonation of aliphatic sulfonates. The polypeptide is Alkanesulfonate monooxygenase (Pseudomonas putida (strain W619)).